Here is a 500-residue protein sequence, read N- to C-terminus: Probable cytosol aminopeptidase (500 aa).

Mn(2+) is bound by residues lysine 264 and aspartate 269. The active site involves lysine 276. Positions 287, 346, and 348 each coordinate Mn(2+). Arginine 350 is an active-site residue.

The protein belongs to the peptidase M17 family. The cofactor is Mn(2+).

It is found in the cytoplasm. The enzyme catalyses Release of an N-terminal amino acid, Xaa-|-Yaa-, in which Xaa is preferably Leu, but may be other amino acids including Pro although not Arg or Lys, and Yaa may be Pro. Amino acid amides and methyl esters are also readily hydrolyzed, but rates on arylamides are exceedingly low.. It carries out the reaction Release of an N-terminal amino acid, preferentially leucine, but not glutamic or aspartic acids.. Presumably involved in the processing and regular turnover of intracellular proteins. Catalyzes the removal of unsubstituted N-terminal amino acids from various peptides. In Rhodopseudomonas palustris (strain BisB5), this protein is Probable cytosol aminopeptidase.